Reading from the N-terminus, the 214-residue chain is Small ribosomal subunit protein uS3c (214 aa).

Residues 39-111 form the KH type-2 domain; sequence IRTYIHTISK…QLTINVLEVE (73 aa).

It belongs to the universal ribosomal protein uS3 family. Part of the 30S ribosomal subunit.

Its subcellular location is the plastid. It is found in the chloroplast. The polypeptide is Small ribosomal subunit protein uS3c (rps3) (Phaeodactylum tricornutum (strain CCAP 1055/1)).